The primary structure comprises 170 residues: Small ribosomal subunit protein uS5 (170 aa).

An S5 DRBM domain is found at 13–76 (LLEKLVGVRR…ENARKNMISV (64 aa)).

The protein belongs to the universal ribosomal protein uS5 family. As to quaternary structure, part of the 30S ribosomal subunit. Contacts proteins S4 and S8.

In terms of biological role, with S4 and S12 plays an important role in translational accuracy. Located at the back of the 30S subunit body where it stabilizes the conformation of the head with respect to the body. This chain is Small ribosomal subunit protein uS5, found in Nitrosococcus oceani (strain ATCC 19707 / BCRC 17464 / JCM 30415 / NCIMB 11848 / C-107).